Consider the following 366-residue polypeptide: NADH-quinone oxidoreductase subunit D (366 aa).

It belongs to the complex I 49 kDa subunit family. NDH-1 is composed of 14 different subunits. Subunits NuoB, C, D, E, F, and G constitute the peripheral sector of the complex.

It is found in the cell membrane. It carries out the reaction a quinone + NADH + 5 H(+)(in) = a quinol + NAD(+) + 4 H(+)(out). Its function is as follows. NDH-1 shuttles electrons from NADH, via FMN and iron-sulfur (Fe-S) centers, to quinones in the respiratory chain. The immediate electron acceptor for the enzyme in this species is believed to be a menaquinone. Couples the redox reaction to proton translocation (for every two electrons transferred, four hydrogen ions are translocated across the cytoplasmic membrane), and thus conserves the redox energy in a proton gradient. In Bacillus cereus (strain ATCC 14579 / DSM 31 / CCUG 7414 / JCM 2152 / NBRC 15305 / NCIMB 9373 / NCTC 2599 / NRRL B-3711), this protein is NADH-quinone oxidoreductase subunit D.